The primary structure comprises 490 residues: Cytochrome P450 90D2 (490 aa).

The chain crosses the membrane as a helical span at residues 4–24 (AAAGWAAPAFAVAAVVIWVVL). Heme is bound at residue C437.

It belongs to the cytochrome P450 family. Heme serves as cofactor. As to expression, expressed at low levels leaf blades, shoot apex and elongating stem.

The protein localises to the membrane. The catalysed reaction is 6-deoxoteasterone + reduced [NADPH--hemoprotein reductase] + O2 = 3-dehydro-6-deoxoteasterone + oxidized [NADPH--hemoprotein reductase] + 2 H2O + H(+). It functions in the pathway plant hormone biosynthesis; brassinosteroid biosynthesis. Functionally, catalyzes the C6-oxidation step in brassinosteroids biosynthesis. May convert 6-deoxoteasterone (6-deoxoTE) to 3-dehydro-6-deoxoteasterone (6-deoxo3DT, 6-deoxo3DHT), and teasterone (TE) to 3-dehydroteasterone (3DT, 3-DHT). Involved in the elongation of leaf sheaths and stems. This is Cytochrome P450 90D2 from Oryza sativa subsp. japonica (Rice).